A 405-amino-acid chain; its full sequence is MKILVLNAGSSTQKSCLYEIADEAFSTQASQPLWEGKINWTQDRGVAEIEVKTATGATLQESISDDSPQAHLAYMLNTLSDGDTKVIDRLSEIDVVGHRIVHGGEDYRDSVVITEDVKKAIASLSNLAPAHNPVALSGIEAIEKILKDVTQIAVFDTGFHATIPDAAAIYPGPYQWVEQGIRRYGFHGISHQYCSQRAAQILGQDVASGRLITCHLGNGCSLAAIKNGRSIDTTMGFTPLEGLMMGSRSGSVDPGILIYLLRYCDYSVEKLDEILNKASGLKGISGVSSDMREVRKAIAQGNSRAQLAWDIYVHRLRSGIGAMVTSLGGLDALVFTAGVGEHSAEIRQAACEAFGFLGLKLDLQKNQQKPVDEDIATNDSAVRVLVIHTQEDWAIAQHCWQILKN.

N7 serves as a coordination point for Mg(2+). Position 14 (K14) interacts with ATP. R99 provides a ligand contact to substrate. Catalysis depends on D156, which acts as the Proton donor/acceptor. ATP-binding positions include 215–219 (HLGNG), 290–292 (DMR), and 338–342 (GVGEH). E391 provides a ligand contact to Mg(2+).

This sequence belongs to the acetokinase family. As to quaternary structure, homodimer. Requires Mg(2+) as cofactor. It depends on Mn(2+) as a cofactor.

The protein localises to the cytoplasm. It catalyses the reaction acetate + ATP = acetyl phosphate + ADP. It participates in metabolic intermediate biosynthesis; acetyl-CoA biosynthesis; acetyl-CoA from acetate: step 1/2. Functionally, catalyzes the formation of acetyl phosphate from acetate and ATP. Can also catalyze the reverse reaction. The chain is Acetate kinase from Nostoc punctiforme (strain ATCC 29133 / PCC 73102).